The following is a 317-amino-acid chain: Putative HTH-type transcriptional regulatory protein TGAM_1316 (317 aa).

The region spanning L131–L189 is the HTH cro/C1-type domain. Positions V142–R161 form a DNA-binding region, H-T-H motif.

This chain is Putative HTH-type transcriptional regulatory protein TGAM_1316, found in Thermococcus gammatolerans (strain DSM 15229 / JCM 11827 / EJ3).